The following is a 109-amino-acid chain: Nascent polypeptide-associated complex protein (109 aa).

The NAC-A/B domain maps to 3-69 (PMNPKQLKKL…TEEERVVLKI (67 aa)).

The protein belongs to the NAC-alpha family. In terms of assembly, homodimer. Interacts with the ribosome. Binds ribosomal RNA.

Its function is as follows. Contacts the emerging nascent chain on the ribosome. The protein is Nascent polypeptide-associated complex protein of Pyrococcus abyssi (strain GE5 / Orsay).